Here is a 469-residue protein sequence, read N- to C-terminus: E3 ubiquitin-protein ligase TRAIP (469 aa).

The RING-type zinc finger occupies 7-50 (CTICSDFFDHSRDVAAIHCGHTFHLQCLIQWFETAPSRTCPQCR). Coiled coils occupy residues 70-177 (EENV…QSQR) and 201-280 (CVSL…TLNL). Residues 211-469 (LKEARKASGE…QAKLDTFLWS (259 aa)) are interaction with CYLD. K304 participates in a covalent cross-link: Glycyl lysine isopeptide (Lys-Gly) (interchain with G-Cter in SUMO2). The short motif at 460-469 (QAKLDTFLWS) is the PIP-box element.

This sequence belongs to the TRAIP family. Interacts (via PIP-box) with PCNA. Binds TRAF1, TRAF2, TRAF3, TRAF5 and TRAF6 is part of the receptor-TRAF signaling complex. May interact with CYLD; the C-terminus interacts with CYLD, however the interaction was not detected with the full-length protein. Interacts with POLK and POLN. Interacts with UIMC1. Post-translationally, sumoylated; sumoylation is required for nuclear localization. Sumoylation increases protein stability, possibly by preventing ubiquitination. In terms of processing, autoubiquitinated.

The protein resides in the nucleus. Its subcellular location is the nucleoplasm. It localises to the nucleolus. The protein localises to the chromosome. It is found in the cytoplasm. The protein resides in the perinuclear region. The enzyme catalyses S-ubiquitinyl-[E2 ubiquitin-conjugating enzyme]-L-cysteine + [acceptor protein]-L-lysine = [E2 ubiquitin-conjugating enzyme]-L-cysteine + N(6)-ubiquitinyl-[acceptor protein]-L-lysine.. It participates in protein modification; protein ubiquitination. Its function is as follows. E3 ubiquitin ligase required to protect genome stability in response to replication stress. Acts as a key regulator of interstrand cross-link repair, which takes place when both strands of duplex DNA are covalently tethered together, thereby blocking replication and transcription. Controls the choice between the two pathways of replication-coupled interstrand-cross-link repair by mediating ubiquitination of MCM7 subunit of the CMG helicase complex. Short ubiquitin chains on MCM7 promote recruitment of DNA glycosylase NEIL3. If the interstrand cross-link cannot be cleaved by NEIL3, the ubiquitin chains continue to grow on MCM7, promoting the unloading of the CMG helicase complex by the VCP/p97 ATPase, enabling the Fanconi anemia DNA repair pathway. Only catalyzes ubiquitination of MCM7 when forks converge. Also involved in the repair of covalent DNA-protein cross-links (DPCs) during DNA synthesis: promotes ubiquitination of DPCs, leading to their degradation by the proteasome. Has also been proposed to play a role in promoting translesion synthesis by mediating the assembly of 'Lys-63'-linked poly-ubiquitin chains on the Y-family polymerase POLN in order to facilitate bypass of DNA lesions and preserve genomic integrity. The function in translesion synthesis is however controversial. Acts as a regulator of the spindle assembly checkpoint. Also acts as a negative regulator of innate immune signaling by inhibiting activation of NF-kappa-B mediated by TNF. Negatively regulates TLR3/4- and RIG-I-mediated IRF3 activation and subsequent IFNB1 production and cellular antiviral response by promoting 'Lys-48'-linked polyubiquitination of TNK1 leading to its proteasomal degradation. In Homo sapiens (Human), this protein is E3 ubiquitin-protein ligase TRAIP.